The sequence spans 561 residues: Potassium-transporting ATPase potassium-binding subunit (561 aa).

A run of 12 helical transmembrane segments spans residues 1 to 21 (MMAS…LLAR), 62 to 82 (YLLA…LILM), 132 to 152 (GLTV…FALM), 173 to 193 (ITLY…VSQG), 253 to 273 (FVQM…FGDV), 283 to 303 (LLWS…WAEV), 327 to 347 (FGIL…CGAV), 356 to 376 (ALGG…FGGV), 379 to 399 (GLYG…LMIG), 416 to 436 (MTAL…ALAM), 483 to 503 (MLLA…VLAI), and 526 to 546 (LFIA…FIPA).

Belongs to the KdpA family. As to quaternary structure, the system is composed of three essential subunits: KdpA, KdpB and KdpC.

Its subcellular location is the cell inner membrane. In terms of biological role, part of the high-affinity ATP-driven potassium transport (or Kdp) system, which catalyzes the hydrolysis of ATP coupled with the electrogenic transport of potassium into the cytoplasm. This subunit binds the periplasmic potassium ions and delivers the ions to the membrane domain of KdpB through an intramembrane tunnel. The polypeptide is Potassium-transporting ATPase potassium-binding subunit (Erwinia tasmaniensis (strain DSM 17950 / CFBP 7177 / CIP 109463 / NCPPB 4357 / Et1/99)).